The sequence spans 1418 residues: Chromatin remodeling factor mit1 (1418 aa).

Residues 135 to 148 (DETASDSATSSSSD) are compositionally biased toward low complexity. The segment at 135-156 (DETASDSATSSSSDTNKKVNRK) is disordered. The segment at 212-271 (VCVCVKCHGREHRSSGKNFVYCDHCSNVYHYDCSPLPSLNKETRNYSQQNGFICPLCSKN) adopts a PHD-type zinc-finger fold. The segment at 215-269 (CVKCHGREHRSSGKNFVYCDHCSNVYHYDCSPLPSLNKETRNYSQQNGFICPLCS) adopts an RING-type; atypical zinc-finger fold. A Helicase ATP-binding domain is found at 568–738 (YLRWYTHHPC…FNLLQFLNPM (171 aa)). Residue 581 to 588 (DEMGLGKT) coordinates ATP. The 160-residue stretch at 875–1034 (ILRLLVPKLI…QNHNSEKDLE (160 aa)) folds into the Helicase C-terminal domain.

It belongs to the SNF2/RAD54 helicase family. As to quaternary structure, interacts with clr3.

It is found in the nucleus. It localises to the chromosome. The protein localises to the centromere. Its subcellular location is the telomere. In terms of biological role, required for proper positioning of nucleosomes at heterochromatic loci and for transcriptional gene silencing (TGS) function of the Snf2/Hdac-containing repressor complex (SHREC). The protein is Chromatin remodeling factor mit1 (mit1) of Schizosaccharomyces pombe (strain 972 / ATCC 24843) (Fission yeast).